The following is a 56-amino-acid chain: Protein SspF (56 aa).

The protein belongs to the alpha/beta-type SASP family.

In terms of biological role, may play some important role in either sporulation or the dormant spore. This is Protein SspF (sspF) from Priestia megaterium (strain ATCC 12872 / QMB1551) (Bacillus megaterium).